An 82-amino-acid polypeptide reads, in one-letter code: MIKLRLKRFGKKRAASYRIVAMNSRDRRDGRPLEELGYYNPMTDETNLRVEPLVKRLKEGAQPTDTVRRILEKANIFEQVRA.

The protein belongs to the bacterial ribosomal protein bS16 family.

This chain is Small ribosomal subunit protein bS16, found in Cyanothece sp. (strain PCC 7425 / ATCC 29141).